A 176-amino-acid chain; its full sequence is Methylated-DNA--protein-cysteine methyltransferase (176 aa).

The active-site Nucleophile; methyl group acceptor is cysteine 142.

Belongs to the MGMT family.

The protein resides in the cytoplasm. It carries out the reaction a 6-O-methyl-2'-deoxyguanosine in DNA + L-cysteinyl-[protein] = S-methyl-L-cysteinyl-[protein] + a 2'-deoxyguanosine in DNA. It catalyses the reaction a 4-O-methyl-thymidine in DNA + L-cysteinyl-[protein] = a thymidine in DNA + S-methyl-L-cysteinyl-[protein]. Involved in the cellular defense against the biological effects of O6-methylguanine (O6-MeG) and O4-methylthymine (O4-MeT) in DNA. Repairs the methylated nucleobase in DNA by stoichiometrically transferring the methyl group to a cysteine residue in the enzyme. This is a suicide reaction: the enzyme is irreversibly inactivated. The polypeptide is Methylated-DNA--protein-cysteine methyltransferase (Methanothermobacter thermautotrophicus (strain ATCC 29096 / DSM 1053 / JCM 10044 / NBRC 100330 / Delta H) (Methanobacterium thermoautotrophicum)).